The primary structure comprises 297 residues: Undecaprenyl-diphosphatase 3 (297 aa).

The next 6 membrane-spanning stretches (helical) occupy residues Pro39 to Phe59, Trp89 to Ile109, Leu118 to Ser138, Phe203 to Gly223, Pro237 to Leu257, and Phe268 to Ile288.

This sequence belongs to the UppP family.

Its subcellular location is the cell membrane. It carries out the reaction di-trans,octa-cis-undecaprenyl diphosphate + H2O = di-trans,octa-cis-undecaprenyl phosphate + phosphate + H(+). Its function is as follows. Catalyzes the dephosphorylation of undecaprenyl diphosphate (UPP). Confers resistance to bacitracin. This is Undecaprenyl-diphosphatase 3 from Frankia alni (strain DSM 45986 / CECT 9034 / ACN14a).